A 257-amino-acid chain; its full sequence is MVSLFWQTTGTGDRDLVLLHGWGLNAEVWSYIVPRLATHFRLHLVDLPGYGRSRGYGALTLEEMAEEVASRAPHGALWLGWSLGGLVATTVARRCPHAVAGLVTVASSPRFCADGDWPGIRPEVLEGFARELRQDFTRTVSRFLGLQTLGTASARQDTRWLKSVVLAHPAPAIEVLTGGLALLRTSDVRKALDQLDVPLLRLYGYLDGLVPRKVVPLVDELSTASHSIVFAGAAHAPFISHPVPFCQALCDFSQLES.

Residues 16–242 (LVLLHGWGLN…AAHAPFISHP (227 aa)) enclose the AB hydrolase-1 domain. Residues Trp-22, 82–83 (SL), and 143–147 (FLGLQ) contribute to the substrate site. Ser-82 functions as the Nucleophile in the catalytic mechanism. Catalysis depends on residues Asp-207 and His-235. Residue His-235 participates in substrate binding.

It belongs to the AB hydrolase superfamily. Carboxylesterase BioH family. Monomer.

It is found in the cytoplasm. The catalysed reaction is 6-carboxyhexanoyl-[ACP] methyl ester + H2O = 6-carboxyhexanoyl-[ACP] + methanol + H(+). Its pathway is cofactor biosynthesis; biotin biosynthesis. The physiological role of BioH is to remove the methyl group introduced by BioC when the pimeloyl moiety is complete. It allows to synthesize pimeloyl-ACP via the fatty acid synthetic pathway through the hydrolysis of the ester bonds of pimeloyl-ACP esters. This Sodalis glossinidius (strain morsitans) protein is Pimeloyl-[acyl-carrier protein] methyl ester esterase.